We begin with the raw amino-acid sequence, 164 residues long: Cytochrome c-type biogenesis protein CcmE (164 aa).

Topologically, residues 1 to 8 are cytoplasmic; the sequence is MNPRRKKR. Residues 9–29 traverse the membrane as a helical; Signal-anchor for type II membrane protein segment; the sequence is LTLAVALIGGVAAIASLLLYA. At 30–164 the chain is on the periplasmic side; that stretch reads LNSNLNLFFT…EDQSKAGGYK (135 aa). 2 residues coordinate heme: His131 and Tyr135. Residues 140–164 form a disordered region; sequence VAEAMGQSHEKLDYSEDQSKAGGYK. A compositionally biased stretch (basic and acidic residues) spans 147–158; it reads SHEKLDYSEDQS.

This sequence belongs to the CcmE/CycJ family.

The protein localises to the cell inner membrane. In terms of biological role, heme chaperone required for the biogenesis of c-type cytochromes. Transiently binds heme delivered by CcmC and transfers the heme to apo-cytochromes in a process facilitated by CcmF and CcmH. This Shewanella piezotolerans (strain WP3 / JCM 13877) protein is Cytochrome c-type biogenesis protein CcmE.